A 290-amino-acid polypeptide reads, in one-letter code: Forkhead box protein O3B (290 aa).

Disordered regions lie at residues 1 to 30 and 44 to 239; these read METD…TEEG and AAAA…SSRR. Low complexity-rich tracts occupy residues 44–59 and 75–91; these read AAAA…RGVH and RTPA…EAPA. Thr-117 is subject to Phosphothreonine; by PKB/AKT1. Positions 142–153 are enriched in acidic residues; that stretch reads IPEEEDDEDDED. The segment at residues 242 to 290 is a DNA-binding region (fork-head); it reads WGNLSYADLITRAIESSPDRRLTLSQIYEWMVSCVPYFKDKGNSNSSAG.

The protein resides in the cytoplasm. The protein localises to the cytosol. Functionally, transcription factor. This Homo sapiens (Human) protein is Forkhead box protein O3B.